We begin with the raw amino-acid sequence, 169 residues long: Photosystem I assembly protein Ycf3 (169 aa).

TPR repeat units follow at residues 35-68 (AFTY…EIDP), 72-105 (SYIL…NPSL), and 120-153 (GEQA…APNN).

This sequence belongs to the Ycf3 family.

Its subcellular location is the plastid. The protein resides in the chloroplast thylakoid membrane. Its function is as follows. Essential for the assembly of the photosystem I (PSI) complex. May act as a chaperone-like factor to guide the assembly of the PSI subunits. This Staurastrum punctulatum (Green alga) protein is Photosystem I assembly protein Ycf3.